The sequence spans 462 residues: DNA polymerase delta subunit 3 (462 aa).

Position 2 is an N-acetylalanine (alanine 2). Disordered regions lie at residues alanine 144 to glutamine 186, threonine 200 to glycine 230, alanine 254 to lysine 384, and serine 403 to lysine 462. Residues glutamine 156–glycine 174 are compositionally biased toward polar residues. Positions aspartate 204 to glutamate 215 are enriched in basic and acidic residues. The span at serine 218–glycine 230 shows a compositional bias: low complexity. A Glycyl lysine isopeptide (Lys-Gly) (interchain with G-Cter in SUMO); alternate cross-link involves residue lysine 256. Residue lysine 256 forms a Glycyl lysine isopeptide (Lys-Gly) (interchain with G-Cter in SUMO2); alternate linkage. Residue lysine 259 forms a Glycyl lysine isopeptide (Lys-Gly) (interchain with G-Cter in SUMO2) linkage. A compositionally biased stretch (basic and acidic residues) spans arginine 284–leucine 305. Serine 306 carries the phosphoserine modification. The segment covering serine 330 to glutamate 344 has biased composition (acidic residues). Pro residues predominate over residues proline 348 to valine 368. Phosphoserine is present on residues serine 403 and serine 405. The residue at position 407 (threonine 407) is a Phosphothreonine. Serine 409 is subject to Phosphoserine. Residues lysine 416–alanine 427 show a composition bias toward low complexity. The span at valine 428–lysine 437 shows a compositional bias: basic and acidic residues. Lysine 429 participates in a covalent cross-link: Glycyl lysine isopeptide (Lys-Gly) (interchain with G-Cter in SUMO); alternate. Lysine 429 is covalently cross-linked (Glycyl lysine isopeptide (Lys-Gly) (interchain with G-Cter in SUMO2); alternate). Over residues arginine 451–lysine 462 the composition is skewed to polar residues. The PIP-box signature appears at glutamine 452–phenylalanine 459. Serine 454 is modified (phosphoserine).

In terms of assembly, component of both the DNA polymerase delta and DNA polymerase zeta complexes. The tetrameric DNA polymerase delta complex (Pol-delta4), which consists of POLD1/p125, POLD2/p50, POLD3/p66/p68 and POLD4/p12, with POLD1 bearing DNA polymerase and 3' to 5' proofreading exonuclease activities. Within this complex, directly interacts with POLD2. Following stress caused by DNA damaging agents or by replication stress, POLD4 is degraded and Pol-delta4 is converted into a trimeric form of the complex (Pol-delta3), which consists of POLD1, POLD2 and POLD3. Pol-delta3 is the major form occurring at S phase replication sites, as well as DNA damage sites. Directly interacts with PCNA, as do POLD1 and POLD4; this interaction stimulates Pol-delta polymerase activity. POLD3 phosphorylation at Ser-454 impairs PCNA binding. Component of the DNA polymerase zeta complex (POLZ), which consists of REV3L, MAD2L2, POLD2 and POLD3, with REV3L bearing DNA polymerase catalytic activity. The DNA polymerase delta complex interacts with POLDIP2; this interaction is probably mediated through direct binding to POLD2. Ubiquitinated, but not targeted to the proteasome. Sumoylated. Sumoylation by SUMO3 may be predominant. Post-translationally, phosphorylation at Ser-454 is thought to decrease the affinity for PCNA and Pol-delta4 processivity. May be phosphorylated by CDK1-cyclin-A complex, as well as CDK2-cyclin-A and CDK2-cyclin-E complexes. PCNA interferes with CDK-cyclin phosphorylation.

Its subcellular location is the cytoplasm. The protein localises to the nucleus. Functionally, accessory component of both the DNA polymerase delta complex and the DNA polymerase zeta complex. As a component of the trimeric and tetrameric DNA polymerase delta complexes (Pol-delta3 and Pol-delta4, respectively), plays a role in high fidelity genome replication, including in lagging strand synthesis, and repair. Required for optimal Pol-delta activity. Stabilizes the Pol-delta complex and plays a major role in Pol-delta stimulation by PCNA. Pol-delta3 and Pol-delta4 are characterized by the absence or the presence of POLD4. They exhibit differences in catalytic activity. Most notably, Pol-delta3 shows higher proofreading activity than Pol-delta4. Although both Pol-delta3 and Pol-delta4 process Okazaki fragments in vitro, Pol-delta3 may also be better suited to fulfill this task, exhibiting near-absence of strand displacement activity compared to Pol-delta4 and stalling on encounter with the 5'-blocking oligonucleotides. Pol-delta3 idling process may avoid the formation of a gap, while maintaining a nick that can be readily ligated. Along with DNA polymerase kappa, DNA polymerase delta carries out approximately half of nucleotide excision repair (NER) synthesis following UV irradiation. In this context, POLD3, along with PCNA and RFC1-replication factor C complex, is required to recruit POLD1, the catalytic subunit of the polymerase delta complex, to DNA damage sites. Under conditions of DNA replication stress, required for the repair of broken replication forks through break-induced replication (BIR). Involved in the translesion synthesis (TLS) of templates carrying O6-methylguanine or abasic sites performed by Pol-delta4, independently of DNA polymerase zeta (REV3L) or eta (POLH). Facilitates abasic site bypass by DNA polymerase delta by promoting extension from the nucleotide inserted opposite the lesion. Also involved in TLS, as a component of the tetrameric DNA polymerase zeta complex. Along with POLD2, dramatically increases the efficiency and processivity of DNA synthesis of the DNA polymerase zeta complex compared to the minimal zeta complex, consisting of only REV3L and REV7. This Mus musculus (Mouse) protein is DNA polymerase delta subunit 3 (Pold3).